The sequence spans 35 residues: Photosystem II reaction center protein M (35 aa).

A helical membrane pass occupies residues 5 to 25 (ILAVIATALFIIIPTSFLLIL).

The protein belongs to the PsbM family. PSII is composed of 1 copy each of membrane proteins PsbA, PsbB, PsbC, PsbD, PsbE, PsbF, PsbH, PsbI, PsbJ, PsbK, PsbL, PsbM, PsbT, PsbX, PsbY, PsbZ, Psb30/Ycf12, at least 3 peripheral proteins of the oxygen-evolving complex and a large number of cofactors. It forms dimeric complexes.

Its subcellular location is the plastid. It is found in the chloroplast thylakoid membrane. In terms of biological role, one of the components of the core complex of photosystem II (PSII). PSII is a light-driven water:plastoquinone oxidoreductase that uses light energy to abstract electrons from H(2)O, generating O(2) and a proton gradient subsequently used for ATP formation. It consists of a core antenna complex that captures photons, and an electron transfer chain that converts photonic excitation into a charge separation. This subunit is found at the monomer-monomer interface. In Staurastrum punctulatum (Green alga), this protein is Photosystem II reaction center protein M.